The following is a 248-amino-acid chain: Ribonuclease PH (248 aa).

Phosphate is bound by residues Arg-86 and 124 to 126 (GTR).

It belongs to the RNase PH family. In terms of assembly, homohexameric ring arranged as a trimer of dimers.

The enzyme catalyses tRNA(n+1) + phosphate = tRNA(n) + a ribonucleoside 5'-diphosphate. Phosphorolytic 3'-5' exoribonuclease that plays an important role in tRNA 3'-end maturation. Removes nucleotide residues following the 3'-CCA terminus of tRNAs; can also add nucleotides to the ends of RNA molecules by using nucleoside diphosphates as substrates, but this may not be physiologically important. Probably plays a role in initiation of 16S rRNA degradation (leading to ribosome degradation) during starvation. This Listeria welshimeri serovar 6b (strain ATCC 35897 / DSM 20650 / CCUG 15529 / CIP 8149 / NCTC 11857 / SLCC 5334 / V8) protein is Ribonuclease PH.